We begin with the raw amino-acid sequence, 64 residues long: Conotoxin Ts-011 (64 aa).

A signal peptide spans 1-22 (MHCLPVPVILLLLIASTPSVDA). Positions 23 to 51 (RPKTKDDVPPASFHGADNANRILRTLWNL) are excised as a propeptide. An Isoleucine amide modification is found at isoleucine 63.

Belongs to the conotoxin T superfamily. In terms of processing, contains 2 disulfide bonds that can be either 'C1-C3, C2-C4' or 'C1-C4, C2-C3', since these disulfide connectivities have been observed for conotoxins with cysteine framework V (for examples, see AC P0DQQ7 and AC P81755). Expressed by the venom duct.

The protein resides in the secreted. This Conus tessulatus (Tessellate cone) protein is Conotoxin Ts-011.